The chain runs to 238 residues: Outer membrane protein A (238 aa).

The next 5 beta stranded transmembrane spans lie at 1 to 8, 13 to 21, 43 to 52, 57 to 64, and 83 to 91; these read LTAKLGYP, LDIYTRLGG, PVFAGGVEYA, IATRLEYQ, and LLSVGVSYR. A run of 3 repeats spans residues 104-105, 106-107, and 108-109. Positions 104 to 109 are 3 X 2 AA tandem repeats of A-P; sequence APAPAP. The 128-residue stretch at 111-238 folds into the OmpA-like domain; sequence VQTKHFTLKS…RRVEIEVKGI (128 aa). Cys-212 and Cys-224 are joined by a disulfide.

It belongs to the outer membrane OOP (TC 1.B.6) superfamily. OmpA family. Monomer and homodimer.

It localises to the cell outer membrane. With TolR probably plays a role in maintaining the position of the peptidoglycan cell wall in the periplasm. Acts as a porin with low permeability that allows slow penetration of small solutes; an internal gate slows down solute passage. The polypeptide is Outer membrane protein A (Citrobacter freundii).